The following is a 270-amino-acid chain: Glutamate racemase (270 aa).

Substrate is bound by residues 14-15 and 46-47; these read DS and YG. Cys-77 functions as the Proton donor/acceptor in the catalytic mechanism. Position 78-79 (78-79) interacts with substrate; it reads NT. Cys-189 functions as the Proton donor/acceptor in the catalytic mechanism. Residue 190–191 coordinates substrate; that stretch reads TH.

It belongs to the aspartate/glutamate racemases family.

The enzyme catalyses L-glutamate = D-glutamate. Its pathway is cell wall biogenesis; peptidoglycan biosynthesis. Its function is as follows. Provides the (R)-glutamate required for cell wall biosynthesis. This is Glutamate racemase from Neisseria meningitidis serogroup A / serotype 4A (strain DSM 15465 / Z2491).